We begin with the raw amino-acid sequence, 377 residues long: GTPase Obg (377 aa).

Positions 1–159 (MKFVDEATIE…RRLRMELKVL (159 aa)) constitute an Obg domain. Residues 127–148 (NIHFKSSTNRAPRQWTPGKEGE) form a disordered region. Positions 160 to 336 (ADVGLLGLPN…LIWALQDYLD (177 aa)) constitute an OBG-type G domain. Residues 166–173 (GLPNAGKS), 191–195 (FTTLH), 213–216 (DIPG), 288–291 (NKLD), and 317–319 (SGL) each bind GTP. Residues Ser173 and Thr193 each contribute to the Mg(2+) site. The interval 339–377 (KRKDQDAQDQADGTYVFEDPRFDASRGGAAPATPPGGDE) is disordered.

The protein belongs to the TRAFAC class OBG-HflX-like GTPase superfamily. OBG GTPase family. In terms of assembly, monomer. It depends on Mg(2+) as a cofactor.

The protein localises to the cytoplasm. Functionally, an essential GTPase which binds GTP, GDP and possibly (p)ppGpp with moderate affinity, with high nucleotide exchange rates and a fairly low GTP hydrolysis rate. Plays a role in control of the cell cycle, stress response, ribosome biogenesis and in those bacteria that undergo differentiation, in morphogenesis control. This chain is GTPase Obg, found in Bordetella bronchiseptica (strain ATCC BAA-588 / NCTC 13252 / RB50) (Alcaligenes bronchisepticus).